A 79-amino-acid polypeptide reads, in one-letter code: Protein NOI4 (79 aa).

Positions 31–68 (KARDEKKTGGKPGSPGKSSEGHVKSGGGDPSKPQPKKW) are disordered. A Phosphoserine modification is found at serine 44.

Belongs to the RIN4 family. Post-translationally, proteolytic cleaved by P.syringae pv tomato AvrRpt2 after Gly-12; this cleavage is critical for subsequent proteasome-dependent elimination.

The sequence is that of Protein NOI4 from Arabidopsis thaliana (Mouse-ear cress).